The sequence spans 251 residues: Triosephosphate isomerase (251 aa).

Residue 9–11 (NWK) participates in substrate binding. Catalysis depends on His95, which acts as the Electrophile. The active-site Proton acceptor is Glu167. Residues Gly173, Ser213, and 234 to 235 (GG) contribute to the substrate site. Ser213 is modified (phosphoserine).

This sequence belongs to the triosephosphate isomerase family. As to quaternary structure, homodimer.

Its subcellular location is the cytoplasm. It catalyses the reaction D-glyceraldehyde 3-phosphate = dihydroxyacetone phosphate. The protein operates within carbohydrate biosynthesis; gluconeogenesis. Its pathway is carbohydrate degradation; glycolysis; D-glyceraldehyde 3-phosphate from glycerone phosphate: step 1/1. Functionally, involved in the gluconeogenesis. Catalyzes stereospecifically the conversion of dihydroxyacetone phosphate (DHAP) to D-glyceraldehyde-3-phosphate (G3P). The chain is Triosephosphate isomerase from Bacillus cytotoxicus (strain DSM 22905 / CIP 110041 / 391-98 / NVH 391-98).